We begin with the raw amino-acid sequence, 108 residues long: Small ribosomal subunit protein mS33 (108 aa).

The interval 84–108 is disordered; that stretch reads LRARDKGAPKKKRTAPSAADAKKKK.

The protein belongs to the mitochondrion-specific ribosomal protein mS33 family. In terms of assembly, component of the mitochondrial small ribosomal subunit (mt-SSU). Mature N.crassa 74S mitochondrial ribosomes consist of a small (37S) and a large (54S) subunit. The 37S small subunit contains a 16S ribosomal RNA (16S mt-rRNA) and 32 different proteins. The 54S large subunit contains a 23S rRNA (23S mt-rRNA) and 42 different proteins.

Its subcellular location is the mitochondrion. In terms of biological role, component of the mitochondrial ribosome (mitoribosome), a dedicated translation machinery responsible for the synthesis of mitochondrial genome-encoded proteins, including at least some of the essential transmembrane subunits of the mitochondrial respiratory chain. The mitoribosomes are attached to the mitochondrial inner membrane and translation products are cotranslationally integrated into the membrane. This is Small ribosomal subunit protein mS33 (rsm27) from Neurospora crassa (strain ATCC 24698 / 74-OR23-1A / CBS 708.71 / DSM 1257 / FGSC 987).